Consider the following 493-residue polypeptide: Glutamyl-tRNA(Gln) amidotransferase subunit A (493 aa).

Active-site charge relay system residues include Lys-79 and Ser-159. Ser-183 functions as the Acyl-ester intermediate in the catalytic mechanism.

It belongs to the amidase family. GatA subfamily. In terms of assembly, heterotrimer of A, B and C subunits.

The catalysed reaction is L-glutamyl-tRNA(Gln) + L-glutamine + ATP + H2O = L-glutaminyl-tRNA(Gln) + L-glutamate + ADP + phosphate + H(+). Functionally, allows the formation of correctly charged Gln-tRNA(Gln) through the transamidation of misacylated Glu-tRNA(Gln) in organisms which lack glutaminyl-tRNA synthetase. The reaction takes place in the presence of glutamine and ATP through an activated gamma-phospho-Glu-tRNA(Gln). The sequence is that of Glutamyl-tRNA(Gln) amidotransferase subunit A from Chelativorans sp. (strain BNC1).